The chain runs to 319 residues: Myoblast determination protein 1 (319 aa).

Residue Met-1 forms a Peptide (Met-Gly) (interchain with G-Cter in ubiquitin) linkage. Lys-104 is modified (N6-methyllysine; by EHMT2). The bHLH domain occupies 109–160; sequence DRRKAATMRERRRLSKVNEAFETLKRCTSSNPNQRLPKVEILRNAIRYIEGL. Disordered regions lie at residues 174-221 and 266-319; these read AAAA…SGAR and APAL…YQVL. 2 stretches are compositionally biased toward polar residues: residues 197-207 and 308-319; these read SDASSPRSNCS and ASANPNPIYQVL.

As to quaternary structure, efficient DNA binding requires dimerization with another bHLH protein. Seems to form active heterodimers with ITF-2. Interacts with SUV39H1. Interacts with DDX5. Interacts with CHD2. Interacts with TSC22D3. Interacts with SETD3. Interacts with P-TEFB complex; promotes the transcriptional activity of MYOD1 through its CDK9-mediated phosphorylation. Interacts with CSRP3. Interacts with NUPR1. Post-translationally, phosphorylated by CDK9. This phosphorylation promotes its function in muscle differentiation. Acetylated by a complex containing EP300 and PCAF. The acetylation is essential to activate target genes. Conversely, its deacetylation by SIRT1 inhibits its function. In terms of processing, ubiquitinated on the N-terminus; which is required for proteasomal degradation. Post-translationally, methylation at Lys-104 by EHMT2/G9a inhibits myogenic activity.

It localises to the nucleus. Functionally, acts as a transcriptional activator that promotes transcription of muscle-specific target genes and plays a role in muscle differentiation. Together with MYF5 and MYOG, co-occupies muscle-specific gene promoter core region during myogenesis. Induces fibroblasts to differentiate into myoblasts. Interacts with and is inhibited by the twist protein. This interaction probably involves the basic domains of both proteins. This Sus scrofa (Pig) protein is Myoblast determination protein 1 (MYOD1).